We begin with the raw amino-acid sequence, 363 residues long: Chorismate synthase (363 aa).

Position 48 (Arg-48) interacts with NADP(+). Residues 125-127, 238-239, Gly-278, 293-297, and Arg-319 each bind FMN; these read RSS, NA, and KPTAS.

It belongs to the chorismate synthase family. In terms of assembly, homotetramer. Requires FMNH2 as cofactor.

The catalysed reaction is 5-O-(1-carboxyvinyl)-3-phosphoshikimate = chorismate + phosphate. Its pathway is metabolic intermediate biosynthesis; chorismate biosynthesis; chorismate from D-erythrose 4-phosphate and phosphoenolpyruvate: step 7/7. In terms of biological role, catalyzes the anti-1,4-elimination of the C-3 phosphate and the C-6 proR hydrogen from 5-enolpyruvylshikimate-3-phosphate (EPSP) to yield chorismate, which is the branch point compound that serves as the starting substrate for the three terminal pathways of aromatic amino acid biosynthesis. This reaction introduces a second double bond into the aromatic ring system. This chain is Chorismate synthase, found in Acinetobacter baumannii (strain AB0057).